Here is a 209-residue protein sequence, read N- to C-terminus: Glutathione S-transferase (209 aa).

The region spanning 7 to 91 (FFFFFFFFFS…YLSKKYNISG (85 aa)) is the GST N-terminal domain. Residues 62 to 63 (QV), 75 to 76 (QS), Asp109, Lys121, and Thr125 contribute to the glutathione site. The 117-residue stretch at 93–209 (GELNEFYADM…YIANRKESVY (117 aa)) folds into the GST C-terminal domain.

The protein belongs to the GST superfamily. In terms of assembly, homodimer. In the absence of ligands two homodimers may interact to form a tetramer.

It catalyses the reaction RX + glutathione = an S-substituted glutathione + a halide anion + H(+). Conjugation of reduced glutathione to a wide number of exogenous and endogenous hydrophobic electrophiles. May also function as a storage protein or ligandin for parasitotoxic ferriprotoporphyrin IX (hemin). The chain is Glutathione S-transferase from Plasmodium yoelii yoelii.